The primary structure comprises 96 residues: Small ribosomal subunit protein uS15 (96 aa).

This sequence belongs to the universal ribosomal protein uS15 family. In terms of assembly, part of the 30S ribosomal subunit. Forms a bridge to the 50S subunit in the 70S ribosome, contacting the 23S rRNA.

In terms of biological role, one of the primary rRNA binding proteins, it binds directly to 16S rRNA where it helps nucleate assembly of the platform of the 30S subunit by binding and bridging several RNA helices of the 16S rRNA. Its function is as follows. Forms an intersubunit bridge (bridge B4) with the 23S rRNA of the 50S subunit in the ribosome. This chain is Small ribosomal subunit protein uS15, found in Streptomyces griseus subsp. griseus (strain JCM 4626 / CBS 651.72 / NBRC 13350 / KCC S-0626 / ISP 5235).